The following is a 1403-amino-acid chain: Nidogen-2 (1403 aa).

An N-terminal signal peptide occupies residues 1–30 (MFRDPTAGWLTPPSPLSLLVMLLLLSRVGA). An NIDO domain is found at 108 to 274 (PFLADIDTSH…GVWAFHIGSR (167 aa)). The tract at residues 323–403 (EDVEYPPVEP…KQGRPVGEGE (81 aa)) is disordered. Residues serine 386 and serine 475 are each glycosylated (O-linked (Xyl...) (chondroitin sulfate) serine). Residues 386-395 (SASLDPQTKQ) are compositionally biased toward polar residues. The region spanning 507 to 547 (NLETCEHSHGRCSQHAFCTDYTTGFCCHCQSRFYGNGKHCL) is the EGF-like 1 domain. 3 disulfide bridges follow: cysteine 511/cysteine 524, cysteine 518/cysteine 533, and cysteine 535/cysteine 546. Positions 551–781 (APHRVNGKVS…GPVEVDSAPV (231 aa)) constitute a Nidogen G2 beta-barrel domain. Residues asparagine 681, asparagine 716, and asparagine 726 are each glycosylated (N-linked (GlcNAc...) asparagine). The EGF-like 2 domain occupies 782–823 (GVNPCYDGSHTCDTTARCHPGTGVDYTCECTPGFQGDGRSCV). 18 disulfide bridges follow: cysteine 786-cysteine 799, cysteine 793-cysteine 809, cysteine 811-cysteine 822, cysteine 828-cysteine 841, cysteine 835-cysteine 850, cysteine 852-cysteine 865, cysteine 875-cysteine 890, cysteine 882-cysteine 900, cysteine 902-cysteine 913, cysteine 919-cysteine 930, cysteine 924-cysteine 939, cysteine 941-cysteine 952, cysteine 968-cysteine 991, cysteine 1002-cysteine 1009, cysteine 1011-cysteine 1033, cysteine 1047-cysteine 1071, cysteine 1082-cysteine 1089, and cysteine 1091-cysteine 1112. Residues 824 to 862 (DVNECATGFHRCGPNSVCVNLVGSYRCECRSGYEFADDQ) form the EGF-like 3; calcium-binding domain. The EGF-like 4 domain maps to 871–914 (PPNPCLDGSHTCAPEGQARCIHHGGSSFSCACLPGFIGTGHQCS). The EGF-like 5; calcium-binding domain maps to 915 to 953 (DVDECAENRCHEAAICYNTPGSFSCRCQPGYRGDGFHCT). Residues 946–948 (RGD) carry the Cell attachment site motif. Thyroglobulin type-1 domains are found at residues 965–1033 (LKPC…PPHC) and 1044–1112 (RTVC…RPAC). The disordered stretch occupies residues 1021-1043 (GTQTPPGSTPPHCGPPPEPTQRP). The span at 1027 to 1040 (GSTPPHCGPPPEPT) shows a compositional bias: pro residues. Asparagine 1152 is a glycosylation site (N-linked (GlcNAc...) asparagine). LDL-receptor class B repeat units lie at residues 1182 to 1225 (RMVY…DHFR), 1226 to 1268 (RTMY…DPIR), 1269 to 1313 (GNLY…DPFS), 1314 to 1355 (KLLC…YADH), and 1357 to 1401 (YHTD…CPTG). The residue at position 1336 (arginine 1336) is an Omega-N-methylarginine.

Interacts with LAMA2. Interacts with COL13A1. Interacts with EFEMP2. In terms of processing, highly N- and O-glycosylated.

The protein resides in the secreted. It localises to the extracellular space. Its subcellular location is the extracellular matrix. The protein localises to the basement membrane. Its function is as follows. Cell adhesion glycoprotein. Might be involved in osteoblast differentiation. It probably has a role in cell-extracellular matrix interactions. This is Nidogen-2 (Nid2) from Mus musculus (Mouse).